Reading from the N-terminus, the 293-residue chain is Elongation factor Ts (293 aa).

Positions 80–83 are involved in Mg(2+) ion dislocation from EF-Tu; the sequence is TDFV.

This sequence belongs to the EF-Ts family.

The protein localises to the cytoplasm. Associates with the EF-Tu.GDP complex and induces the exchange of GDP to GTP. It remains bound to the aminoacyl-tRNA.EF-Tu.GTP complex up to the GTP hydrolysis stage on the ribosome. The polypeptide is Elongation factor Ts (Paraburkholderia phytofirmans (strain DSM 17436 / LMG 22146 / PsJN) (Burkholderia phytofirmans)).